The sequence spans 729 residues: Neurochondrin (729 aa).

Position 2 is an N-acetylserine (S2). The residue at position 2 (S2) is a Phosphoserine. 2 S-palmitoyl cysteine lipidation sites follow: C3 and C4. The residue at position 75 (R75) is an Asymmetric dimethylarginine. S448 bears the Phosphoserine mark.

Belongs to the neurochondrin family. As to quaternary structure, interacts with MCHR1. Interacts with SEMA4C. Interacts with DIAPH1 (via FH3 domain). Interacts with GRM5. Palmitoylated. Palmitoylation by ZDHHC1, ZDHHC3 and ZDHHC11 regulates the association of NCDN with endosome membranes. May also be palmitoylated by ZDHHC7. Expressed in the neuronal, chondral and bone tissues. Expressed in dendrites. Enriched in the brain in the surface layer I-IV. In brains, protein level increases in male but decreases in female with advancing age (at protein level). In adult brains, it is highly expressed in the forebrain and hindbrain. Highly expressed in the hippocampus, piriform cortex, septum, amygdaloid complex, medial geniculate nucleus, inferior colliculus, cerebellar nuclei and the nuclei of the Vth, VIIth, and XIIth cranial nerves. In bone tissues, it is expressed in osteoblasts and osteocytes.

It is found in the cytoplasm. The protein localises to the cytosol. It localises to the endosome membrane. The protein resides in the cell projection. Its subcellular location is the dendrite. It is found in the postsynapse. Its function is as follows. Probably involved in signal transduction, in the nervous system, via increasing cell surface localization of GRM5 and positively regulating its signaling. Required for the spatial learning process. Acts as a negative regulator of Ca(2+)-calmodulin-dependent protein kinase 2 (CaMK2) phosphorylation. May play a role in modulating melanin-concentrating hormone-mediated functions via its interaction with MCHR1 that interferes with G protein-coupled signal transduction. May be involved in bone metabolism. May also be involved in neurite outgrowth. The sequence is that of Neurochondrin (Ncdn) from Mus musculus (Mouse).